The chain runs to 374 residues: N5-carboxyaminoimidazole ribonucleotide synthase (374 aa).

ATP-binding positions include Arg-108, Lys-148, 153-159, 183-186, Glu-191, His-214, and 266-267; these read GYDGKGQ, EKYL, and NE. The ATP-grasp domain maps to 112–296; it reads KETLKSAGTK…QFDTHILAVT (185 aa).

It belongs to the PurK/PurT family. Homodimer.

It catalyses the reaction 5-amino-1-(5-phospho-beta-D-ribosyl)imidazole + hydrogencarbonate + ATP = 5-carboxyamino-1-(5-phospho-D-ribosyl)imidazole + ADP + phosphate + 2 H(+). It functions in the pathway purine metabolism; IMP biosynthesis via de novo pathway; 5-amino-1-(5-phospho-D-ribosyl)imidazole-4-carboxylate from 5-amino-1-(5-phospho-D-ribosyl)imidazole (N5-CAIR route): step 1/2. Catalyzes the ATP-dependent conversion of 5-aminoimidazole ribonucleotide (AIR) and HCO(3)(-) to N5-carboxyaminoimidazole ribonucleotide (N5-CAIR). The sequence is that of N5-carboxyaminoimidazole ribonucleotide synthase from Staphylococcus aureus (strain MSSA476).